Consider the following 400-residue polypeptide: Formate-dependent phosphoribosylglycinamide formyltransferase (400 aa).

Residues Glu22–Leu23 and Glu82 contribute to the N(1)-(5-phospho-beta-D-ribosyl)glycinamide site. Residues Arg115, Lys156, Ser161–Gln166, Glu196–Ile199, and Glu204 each bind ATP. The ATP-grasp domain occupies Arg120–Leu309. 2 residues coordinate Mg(2+): Glu268 and Glu280. Residues Asp287, Lys361, and Arg368–Arg369 each bind N(1)-(5-phospho-beta-D-ribosyl)glycinamide.

Belongs to the PurK/PurT family. Homodimer.

It catalyses the reaction N(1)-(5-phospho-beta-D-ribosyl)glycinamide + formate + ATP = N(2)-formyl-N(1)-(5-phospho-beta-D-ribosyl)glycinamide + ADP + phosphate + H(+). It functions in the pathway purine metabolism; IMP biosynthesis via de novo pathway; N(2)-formyl-N(1)-(5-phospho-D-ribosyl)glycinamide from N(1)-(5-phospho-D-ribosyl)glycinamide (formate route): step 1/1. Involved in the de novo purine biosynthesis. Catalyzes the transfer of formate to 5-phospho-ribosyl-glycinamide (GAR), producing 5-phospho-ribosyl-N-formylglycinamide (FGAR). Formate is provided by PurU via hydrolysis of 10-formyl-tetrahydrofolate. The polypeptide is Formate-dependent phosphoribosylglycinamide formyltransferase (Xanthomonas campestris pv. campestris (strain 8004)).